Reading from the N-terminus, the 302-residue chain is N-acetyl-D-glucosamine kinase (302 aa).

Residues 4 to 11 (GFDIGGTK) and 133 to 139 (GGGGLVL) each bind ATP. Zn(2+) contacts are provided by histidine 156, cysteine 176, cysteine 178, and cysteine 183.

The protein belongs to the ROK (NagC/XylR) family. NagK subfamily.

It catalyses the reaction N-acetyl-D-glucosamine + ATP = N-acetyl-D-glucosamine 6-phosphate + ADP + H(+). It participates in cell wall biogenesis; peptidoglycan recycling. Catalyzes the phosphorylation of N-acetyl-D-glucosamine (GlcNAc) derived from cell-wall degradation, yielding GlcNAc-6-P. This is N-acetyl-D-glucosamine kinase from Salmonella typhi.